The chain runs to 204 residues: Holliday junction branch migration complex subunit RuvA (204 aa).

The interval 1–64 (MIGKLKGTIE…EDQIRLFGFM (64 aa)) is domain I. The tract at residues 65–143 (AVLEREWFNL…AFAGEATNIG (79 aa)) is domain II. The interval 144 to 151 (FKQELGEG) is flexible linker. A domain III region spans residues 152–204 (VAPAPVSDAVSALTNLGYSRDQAANAIAAAMKVAGDEADSAKLIRLGLKELSR).

The protein belongs to the RuvA family. Homotetramer. Forms an RuvA(8)-RuvB(12)-Holliday junction (HJ) complex. HJ DNA is sandwiched between 2 RuvA tetramers; dsDNA enters through RuvA and exits via RuvB. An RuvB hexamer assembles on each DNA strand where it exits the tetramer. Each RuvB hexamer is contacted by two RuvA subunits (via domain III) on 2 adjacent RuvB subunits; this complex drives branch migration. In the full resolvosome a probable DNA-RuvA(4)-RuvB(12)-RuvC(2) complex forms which resolves the HJ.

The protein localises to the cytoplasm. Functionally, the RuvA-RuvB-RuvC complex processes Holliday junction (HJ) DNA during genetic recombination and DNA repair, while the RuvA-RuvB complex plays an important role in the rescue of blocked DNA replication forks via replication fork reversal (RFR). RuvA specifically binds to HJ cruciform DNA, conferring on it an open structure. The RuvB hexamer acts as an ATP-dependent pump, pulling dsDNA into and through the RuvAB complex. HJ branch migration allows RuvC to scan DNA until it finds its consensus sequence, where it cleaves and resolves the cruciform DNA. The chain is Holliday junction branch migration complex subunit RuvA from Rhizobium rhizogenes (strain K84 / ATCC BAA-868) (Agrobacterium radiobacter).